We begin with the raw amino-acid sequence, 597 residues long: Elongation factor 4 (597 aa).

The tr-type G domain maps to 2–184 (KNIRNFSIIA…TIVAKVPAPE (183 aa)). GTP is bound by residues 14 to 19 (DHGKST) and 131 to 134 (NKID).

It belongs to the TRAFAC class translation factor GTPase superfamily. Classic translation factor GTPase family. LepA subfamily.

It localises to the cell inner membrane. It catalyses the reaction GTP + H2O = GDP + phosphate + H(+). In terms of biological role, required for accurate and efficient protein synthesis under certain stress conditions. May act as a fidelity factor of the translation reaction, by catalyzing a one-codon backward translocation of tRNAs on improperly translocated ribosomes. Back-translocation proceeds from a post-translocation (POST) complex to a pre-translocation (PRE) complex, thus giving elongation factor G a second chance to translocate the tRNAs correctly. Binds to ribosomes in a GTP-dependent manner. This Francisella tularensis subsp. mediasiatica (strain FSC147) protein is Elongation factor 4.